A 265-amino-acid chain; its full sequence is Hydroxyethylthiazole kinase (265 aa).

Residue M43 coordinates substrate. ATP contacts are provided by K118 and T165. A substrate-binding site is contributed by G192.

Belongs to the Thz kinase family. The cofactor is Mg(2+).

The catalysed reaction is 5-(2-hydroxyethyl)-4-methylthiazole + ATP = 4-methyl-5-(2-phosphooxyethyl)-thiazole + ADP + H(+). It participates in cofactor biosynthesis; thiamine diphosphate biosynthesis; 4-methyl-5-(2-phosphoethyl)-thiazole from 5-(2-hydroxyethyl)-4-methylthiazole: step 1/1. Its function is as follows. Catalyzes the phosphorylation of the hydroxyl group of 4-methyl-5-beta-hydroxyethylthiazole (THZ). This is Hydroxyethylthiazole kinase from Pyrococcus furiosus (strain ATCC 43587 / DSM 3638 / JCM 8422 / Vc1).